Reading from the N-terminus, the 456-residue chain is tRNA-2-methylthio-N(6)-dimethylallyladenosine synthase (456 aa).

One can recognise an MTTase N-terminal domain in the interval 6–125 (KRLFIKTYGC…LPELIAQAHR (120 aa)). [4Fe-4S] cluster contacts are provided by cysteine 15, cysteine 51, cysteine 88, cysteine 163, cysteine 167, and cysteine 170. One can recognise a Radical SAM core domain in the interval 149-385 (QVEGYSAFVT…QELLSDQQAA (237 aa)). The TRAM domain maps to 388–450 (ESMIGRTLPV…RNSLSGSLTG (63 aa)).

The protein belongs to the methylthiotransferase family. MiaB subfamily. As to quaternary structure, monomer. Requires [4Fe-4S] cluster as cofactor.

It localises to the cytoplasm. The enzyme catalyses N(6)-dimethylallyladenosine(37) in tRNA + (sulfur carrier)-SH + AH2 + 2 S-adenosyl-L-methionine = 2-methylsulfanyl-N(6)-dimethylallyladenosine(37) in tRNA + (sulfur carrier)-H + 5'-deoxyadenosine + L-methionine + A + S-adenosyl-L-homocysteine + 2 H(+). In terms of biological role, catalyzes the methylthiolation of N6-(dimethylallyl)adenosine (i(6)A), leading to the formation of 2-methylthio-N6-(dimethylallyl)adenosine (ms(2)i(6)A) at position 37 in tRNAs that read codons beginning with uridine. This chain is tRNA-2-methylthio-N(6)-dimethylallyladenosine synthase, found in Maricaulis maris (strain MCS10) (Caulobacter maris).